Here is a 305-residue protein sequence, read N- to C-terminus: Methionyl-tRNA formyltransferase (305 aa).

(6S)-5,6,7,8-tetrahydrofolate is bound at residue 111–114; sequence SLLP.

Belongs to the Fmt family.

The enzyme catalyses L-methionyl-tRNA(fMet) + (6R)-10-formyltetrahydrofolate = N-formyl-L-methionyl-tRNA(fMet) + (6S)-5,6,7,8-tetrahydrofolate + H(+). In terms of biological role, attaches a formyl group to the free amino group of methionyl-tRNA(fMet). The formyl group appears to play a dual role in the initiator identity of N-formylmethionyl-tRNA by promoting its recognition by IF2 and preventing the misappropriation of this tRNA by the elongation apparatus. This chain is Methionyl-tRNA formyltransferase, found in Campylobacter jejuni subsp. jejuni serotype O:6 (strain 81116 / NCTC 11828).